Reading from the N-terminus, the 447-residue chain is Na(+)-translocating NADH-quinone reductase subunit A (447 aa).

Belongs to the NqrA family. As to quaternary structure, composed of six subunits; NqrA, NqrB, NqrC, NqrD, NqrE and NqrF.

The enzyme catalyses a ubiquinone + n Na(+)(in) + NADH + H(+) = a ubiquinol + n Na(+)(out) + NAD(+). Functionally, NQR complex catalyzes the reduction of ubiquinone-1 to ubiquinol by two successive reactions, coupled with the transport of Na(+) ions from the cytoplasm to the periplasm. NqrA to NqrE are probably involved in the second step, the conversion of ubisemiquinone to ubiquinol. The sequence is that of Na(+)-translocating NADH-quinone reductase subunit A from Klebsiella pneumoniae subsp. pneumoniae (strain ATCC 700721 / MGH 78578).